The following is a 657-amino-acid chain: Receptor-type tyrosine-protein phosphatase R (657 aa).

An N-terminal signal peptide occupies residues 1–21 (MRRAVCFPALCLLLNLHAAGC). Residues 22–227 (FSGNNDHFLA…EADKIWSKEG (206 aa)) are Extracellular-facing. S23 carries an O-linked (Xyl...) (chondroitin sulfate) serine glycan. Residue N129 is glycosylated (N-linked (GlcNAc...) asparagine). The helical transmembrane segment at 228-248 (FYAVVIFLSIFVIIVTCLMIL) threads the bilayer. Residues 249 to 657 (YRLKERFQLS…ESRLSAETVQ (409 aa)) lie on the Cytoplasmic side of the membrane. S272 is subject to Phosphoserine. Position 339 is a phosphoserine; by PKA (S339). Residues 393–647 (LQSEFMEIPM…EFVHHALCLY (255 aa)) enclose the Tyrosine-protein phosphatase domain. Substrate contacts are provided by residues D554, 588-594 (CSAGIGR), and Q632. C588 acts as the Phosphocysteine intermediate in catalysis.

Belongs to the protein-tyrosine phosphatase family. Receptor class 7 subfamily. Interacts with MAPKs. Detected in cerebrospinal fluid (at protein level). Expressed in brain, placenta, small intestine, stomach, uterus and weakly in the prostate. Isoform alpha has been observed only in the brain. Isoform gamma is expressed in brain, placenta and uterus. Isoform delta is expressed in brain, kidney, placenta, prostate, small intestine and uterus.

Its subcellular location is the secreted. The protein localises to the cell membrane. It is found in the cytoplasm. The protein resides in the perinuclear region. It carries out the reaction O-phospho-L-tyrosyl-[protein] + H2O = L-tyrosyl-[protein] + phosphate. Functionally, sequesters mitogen-activated protein kinases (MAPKs) such as MAPK1, MAPK3 and MAPK14 in the cytoplasm in an inactive form. The MAPKs bind to a dephosphorylated kinase interacting motif, phosphorylation of which by the protein kinase A complex releases the MAPKs for activation and translocation into the nucleus. This is Receptor-type tyrosine-protein phosphatase R (PTPRR) from Homo sapiens (Human).